The primary structure comprises 350 residues: Biotin synthase (350 aa).

In terms of domain architecture, Radical SAM core spans 41 to 268 (NEVQISRLLS…LSRVRLSAGR (228 aa)). Residues Cys-56, Cys-60, and Cys-63 each contribute to the [4Fe-4S] cluster site. 4 residues coordinate [2Fe-2S] cluster: Cys-100, Cys-131, Cys-191, and Arg-263.

The protein belongs to the radical SAM superfamily. Biotin synthase family. Homodimer. Requires [4Fe-4S] cluster as cofactor. The cofactor is [2Fe-2S] cluster.

It catalyses the reaction (4R,5S)-dethiobiotin + (sulfur carrier)-SH + 2 reduced [2Fe-2S]-[ferredoxin] + 2 S-adenosyl-L-methionine = (sulfur carrier)-H + biotin + 2 5'-deoxyadenosine + 2 L-methionine + 2 oxidized [2Fe-2S]-[ferredoxin]. It functions in the pathway cofactor biosynthesis; biotin biosynthesis; biotin from 7,8-diaminononanoate: step 2/2. Catalyzes the conversion of dethiobiotin (DTB) to biotin by the insertion of a sulfur atom into dethiobiotin via a radical-based mechanism. This Shewanella baltica (strain OS223) protein is Biotin synthase.